The primary structure comprises 877 residues: Alanine--tRNA ligase (877 aa).

Positions 561, 565, 669, and 673 each coordinate Zn(2+).

The protein belongs to the class-II aminoacyl-tRNA synthetase family. Zn(2+) serves as cofactor.

The protein localises to the cytoplasm. The enzyme catalyses tRNA(Ala) + L-alanine + ATP = L-alanyl-tRNA(Ala) + AMP + diphosphate. In terms of biological role, catalyzes the attachment of alanine to tRNA(Ala) in a two-step reaction: alanine is first activated by ATP to form Ala-AMP and then transferred to the acceptor end of tRNA(Ala). Also edits incorrectly charged Ser-tRNA(Ala) and Gly-tRNA(Ala) via its editing domain. The sequence is that of Alanine--tRNA ligase from Endomicrobium trichonymphae.